A 318-amino-acid polypeptide reads, in one-letter code: Galactofuranose-binding protein YtfQ (318 aa).

The signal sequence occupies residues 1 to 21 (MWKRLLIVSAVSAAMSSMALA). Residues 34 to 38 (ESGWR), 111 to 112 (DR), R167, N220, and D248 contribute to the beta-D-galactofuranose site. C150 and C214 are joined by a disulfide.

This sequence belongs to the bacterial solute-binding protein 2 family. As to quaternary structure, the complex is composed of two ATP-binding proteins (YtfR), two transmembrane proteins (YtfT and YjfF) and a solute-binding protein (YtfQ).

It is found in the periplasm. Its function is as follows. Part of the ABC transporter complex YtfQRT-YjfF involved in galactofuranose transport. Binds to both alpha- and beta-galactofuranose. In Escherichia coli (strain K12), this protein is Galactofuranose-binding protein YtfQ (ytfQ).